Here is a 335-residue protein sequence, read N- to C-terminus: Methionine import ATP-binding protein MetN (335 aa).

The region spanning 2–241 (IQFQRLHKSY…PKHATTRRFV (240 aa)) is the ABC transporter domain. 38–45 (GHSGAGKS) is an ATP binding site.

The protein belongs to the ABC transporter superfamily. Methionine importer (TC 3.A.1.24) family. As to quaternary structure, the complex is composed of two ATP-binding proteins (MetN), two transmembrane proteins (MetI) and a solute-binding protein (MetQ).

The protein resides in the cell inner membrane. It catalyses the reaction L-methionine(out) + ATP + H2O = L-methionine(in) + ADP + phosphate + H(+). The enzyme catalyses D-methionine(out) + ATP + H2O = D-methionine(in) + ADP + phosphate + H(+). In terms of biological role, part of the ABC transporter complex MetNIQ involved in methionine import. Responsible for energy coupling to the transport system. This chain is Methionine import ATP-binding protein MetN, found in Xanthomonas euvesicatoria pv. vesicatoria (strain 85-10) (Xanthomonas campestris pv. vesicatoria).